Here is a 181-residue protein sequence, read N- to C-terminus: Regulator of G-protein signaling 5 (181 aa).

In terms of domain architecture, RGS spans 64–180 (SLDKLLQNSY…VRSEFYKELI (117 aa)).

In terms of tissue distribution, expressed in heart and muscle.

Its subcellular location is the cytoplasm. It is found in the membrane. In terms of biological role, inhibits signal transduction by increasing the GTPase activity of G protein alpha subunits thereby driving them into their inactive GDP-bound form. Binds to G(i)-alpha and G(o)-alpha, but not to G(s)-alpha. This chain is Regulator of G-protein signaling 5 (Rgs5), found in Mus musculus (Mouse).